The primary structure comprises 886 residues: DNA double-strand break repair Rad50 ATPase (886 aa).

ATP contacts are provided by residues 32 to 38 and glutamine 137; that span reads NGAGKSS. 2 coiled-coil regions span residues 181-240 and 320-416; these read IRSL…KEIK and RKKE…GDLN. One can recognise a Zinc-hook domain in the interval 391 to 489; sequence IKDVSDRINQ…EREELEATRN (99 aa). Cysteine 437 and cysteine 440 together coordinate Zn(2+). 2 coiled-coil regions span residues 450–657 and 682–718; these read AKIR…ISEL and EADK…EESK.

Belongs to the SMC family. RAD50 subfamily. Homodimer. Forms a heterotetramer composed of two Mre11 subunits and two Rad50 subunits. Interacts with Mre11 and HerA. Requires Zn(2+) as cofactor.

In terms of biological role, part of the Rad50/Mre11 complex, which is involved in the early steps of DNA double-strand break (DSB) repair. The complex may facilitate opening of the processed DNA ends to aid in the recruitment of HerA and NurA. Rad50 controls the balance between DNA end bridging and DNA resection via ATP-dependent structural rearrangements of the Rad50/Mre11 complex. The chain is DNA double-strand break repair Rad50 ATPase from Sulfolobus acidocaldarius (strain ATCC 33909 / DSM 639 / JCM 8929 / NBRC 15157 / NCIMB 11770).